The following is a 148-amino-acid chain: Lysozyme C-2 (148 aa).

The signal sequence occupies residues 1 to 18; that stretch reads MKTLLTLGLLLLSVTAQA. A C-type lysozyme domain is found at 19–148; it reads KVYERCEFAR…LSQYIRNCGV (130 aa). 4 cysteine pairs are disulfide-bonded: Cys24–Cys146, Cys48–Cys134, Cys83–Cys99, and Cys95–Cys113. Active-site residues include Glu53 and Asp71.

Belongs to the glycosyl hydrolase 22 family. In terms of assembly, monomer. In terms of tissue distribution, expressed weakly in myeloblasts, moderately in immature macrophages, and strongly in both mature macrophages and macrophage-rich tissues.

The protein localises to the secreted. It catalyses the reaction Hydrolysis of (1-&gt;4)-beta-linkages between N-acetylmuramic acid and N-acetyl-D-glucosamine residues in a peptidoglycan and between N-acetyl-D-glucosamine residues in chitodextrins.. Lysozymes have primarily a bacteriolytic function; those in tissues and body fluids are associated with the monocyte-macrophage system and enhance the activity of immunoagents. Lyz2 is active against a range of Gram-positive and Gram-negative bacteria. More effective than Lyz1 in killing Gram-negative bacteria. Lyz1 and Lyz2 are equally effective in killing Gram-positive bacteria. This chain is Lysozyme C-2 (Lyz2), found in Mus musculus (Mouse).